The following is a 226-amino-acid chain: Glutathione S-transferase-like protein gedE (226 aa).

The region spanning 4 to 85 is the GST N-terminal domain; the sequence is LLPIKVWGQG…YLVERYDTAH (82 aa). Residues 92-226 form the GST C-terminal domain; that stretch reads DTNDAQHARQ…VLSAVMPPPS (135 aa).

The protein belongs to the GST superfamily.

It functions in the pathway secondary metabolite biosynthesis. Glutathione S-transferase-like protein; part of the gene cluster that mediates the biosynthesis of geodin, an intermediate in the biosynthesis of other natural products. The pathway begins with the synthesis of atrochrysone thioester by the polyketide synthase (PKS) gedC. The atrochrysone carboxyl ACP thioesterase gedB then breaks the thioester bond and releases the atrochrysone carboxylic acid from gedC. The atrochrysone carboxylic acid is then converted to atrochrysone which is further transformed into emodinanthrone. The next step is performed by the emodinanthrone oxygenase gedH that catalyzes the oxidation of emodinanthrone to emodin. Emodin O-methyltransferase encoded probably by gedA then catalyzes methylation of the 8-hydroxy group of emodin to form questin. Ring cleavage of questin by questin oxidase gedK leads to desmethylsulochrin via several intermediates including questin epoxide. Another methylation step probably catalyzed by methyltransferase gedG leads to the formation of sulochrin which is further converted to dihydrogeodin by the sulochrin halogenase gedL. Finally, the dihydrogeodin oxidase gedJ catalyzes the stereospecific phenol oxidative coupling reaction converting dihydrogeodin to geodin. The protein is Glutathione S-transferase-like protein gedE of Aspergillus terreus (strain NIH 2624 / FGSC A1156).